Consider the following 197-residue polypeptide: Imidazoleglycerol-phosphate dehydratase (197 aa).

It belongs to the imidazoleglycerol-phosphate dehydratase family.

It localises to the cytoplasm. The enzyme catalyses D-erythro-1-(imidazol-4-yl)glycerol 3-phosphate = 3-(imidazol-4-yl)-2-oxopropyl phosphate + H2O. Its pathway is amino-acid biosynthesis; L-histidine biosynthesis; L-histidine from 5-phospho-alpha-D-ribose 1-diphosphate: step 6/9. This chain is Imidazoleglycerol-phosphate dehydratase, found in Nitrosomonas europaea (strain ATCC 19718 / CIP 103999 / KCTC 2705 / NBRC 14298).